Reading from the N-terminus, the 236-residue chain is Small ribosomal subunit protein bS21m (236 aa).

A disordered region spans residues 65–136; the sequence is KPAAGAAAGG…SSKPSPMQTW (72 aa). A compositionally biased stretch (low complexity) spans 107–131; the sequence is SNSSTSSSSSSSSSGGALYSSSKPS.

Belongs to the bacterial ribosomal protein bS21 family. Component of the mitochondrial small ribosomal subunit (mt-SSU). Mature N.crassa 74S mitochondrial ribosomes consist of a small (37S) and a large (54S) subunit. The 37S small subunit contains a 16S ribosomal RNA (16S mt-rRNA) and 32 different proteins. The 54S large subunit contains a 23S rRNA (23S mt-rRNA) and 42 different proteins.

It localises to the mitochondrion. Its function is as follows. Component of the mitochondrial ribosome (mitoribosome), a dedicated translation machinery responsible for the synthesis of mitochondrial genome-encoded proteins, including at least some of the essential transmembrane subunits of the mitochondrial respiratory chain. The mitoribosomes are attached to the mitochondrial inner membrane and translation products are cotranslationally integrated into the membrane. The sequence is that of Small ribosomal subunit protein bS21m (mrp21) from Neurospora crassa (strain ATCC 24698 / 74-OR23-1A / CBS 708.71 / DSM 1257 / FGSC 987).